A 122-amino-acid chain; its full sequence is Large ribosomal subunit protein bL12 (122 aa).

It belongs to the bacterial ribosomal protein bL12 family. In terms of assembly, homodimer. Part of the ribosomal stalk of the 50S ribosomal subunit. Forms a multimeric L10(L12)X complex, where L10 forms an elongated spine to which 2 to 4 L12 dimers bind in a sequential fashion. Binds GTP-bound translation factors.

Forms part of the ribosomal stalk which helps the ribosome interact with GTP-bound translation factors. Is thus essential for accurate translation. This Shewanella loihica (strain ATCC BAA-1088 / PV-4) protein is Large ribosomal subunit protein bL12.